The sequence spans 460 residues: Cysteine--tRNA ligase (460 aa).

Cysteine 27 contacts Zn(2+). Residues proline 29 to histidine 39 carry the 'HIGH' region motif. The Zn(2+) site is built by cysteine 202, histidine 227, and glutamate 231. Positions lysine 259–serine 263 match the 'KMSKS' region motif. Lysine 262 lines the ATP pocket.

Belongs to the class-I aminoacyl-tRNA synthetase family. Monomer. Zn(2+) is required as a cofactor.

Its subcellular location is the cytoplasm. The catalysed reaction is tRNA(Cys) + L-cysteine + ATP = L-cysteinyl-tRNA(Cys) + AMP + diphosphate. The polypeptide is Cysteine--tRNA ligase (Campylobacter lari (strain RM2100 / D67 / ATCC BAA-1060)).